Here is a 540-residue protein sequence, read N- to C-terminus: Hydroxylamine reductase (540 aa).

[4Fe-4S] cluster contacts are provided by Cys-3, Cys-6, Cys-15, and Cys-21. Residues His-236, Glu-260, Cys-304, Cys-395, Cys-423, Cys-448, Glu-483, and Lys-485 each contribute to the hybrid [4Fe-2O-2S] cluster site. Cys-395 carries the post-translational modification Cysteine persulfide.

The protein belongs to the HCP family. [4Fe-4S] cluster serves as cofactor. It depends on hybrid [4Fe-2O-2S] cluster as a cofactor.

It localises to the cytoplasm. It carries out the reaction A + NH4(+) + H2O = hydroxylamine + AH2 + H(+). Functionally, catalyzes the reduction of hydroxylamine to form NH(3) and H(2)O. This chain is Hydroxylamine reductase, found in Methanosarcina mazei (strain ATCC BAA-159 / DSM 3647 / Goe1 / Go1 / JCM 11833 / OCM 88) (Methanosarcina frisia).